A 501-amino-acid polypeptide reads, in one-letter code: LIM domain-containing protein HDR3 (501 aa).

Residues 33–67 (GEANRRRPRVTAGEETTLWEEPVRPKKEEPPRHNN) are disordered. The span at 53–67 (EPVRPKKEEPPRHNN) shows a compositional bias: basic and acidic residues. 2 consecutive UIM domains span residues 65 to 84 (HNNE…DAKN) and 94 to 113 (ENDE…NPYQ). One can recognise an LIM zinc-binding domain in the interval 131-191 (RVCGGCKHEI…KLCYKELHHP (61 aa)). The tract at residues 429-448 (YASSSSSSCRPPPSKKGGIS) is disordered.

As to quaternary structure, interacts (via N-terminus) with GW6A (via C-terminus).

Ubiquitin receptor that functions as a positive regulator of grain size and weight. Functions in the same genetic pathway as GW6A to regulate grain size. Modulates grain size in a similar manner to GW6A, by altering cell proliferation in spikelet hulls. Interacts with and enhances the ubiquitination of GW6A. This stabilizes GW6A, delays protein degradation by the 26S proteasome and enhances GW6A histone acetyltransferase activity. The polypeptide is LIM domain-containing protein HDR3 (Oryza sativa subsp. japonica (Rice)).